We begin with the raw amino-acid sequence, 60 residues long: Chromatin protein Cren7 (60 aa).

The protein belongs to the Cren7 family. In terms of assembly, monomer. In terms of processing, methylated at multiple sites, to varying extents.

Its subcellular location is the chromosome. The protein localises to the cytoplasm. Functionally, a chromatin protein, binds double-stranded DNA without sequence specificity. Constrains negative DNA supercoils. The polypeptide is Chromatin protein Cren7 (Saccharolobus islandicus (strain M.16.4 / Kamchatka #3) (Sulfolobus islandicus)).